The following is a 572-amino-acid chain: Transmembrane glycoprotein NMB (572 aa).

A signal peptide spans 1–22 (MECLYYFLGFLLLAARLPLDAA). At 23–498 (KRFHDVLGNE…DPASPLRMAN (476 aa)) the chain is on the extracellular side. The short motif at 64–66 (RGD) is the Cell attachment site element. Asn-93, Asn-134, Asn-146, Asn-200, Asn-249, Asn-275, Asn-296, Asn-300, Asn-306, and Asn-312 each carry an N-linked (GlcNAc...) asparagine glycan. A PKD domain is found at 240–327 (VTMFQKNDRN…AAPGPCPPPP (88 aa)). Residues 320–362 (PGPCPPPPPPPRPSKPTPSLATTLKSYDSNTPGPAGDNPLELS) are disordered. Over residues 321 to 335 (GPCPPPPPPPRPSKP) the composition is skewed to pro residues. Polar residues predominate over residues 338–351 (SLATTLKSYDSNTP). Residues Asn-459 and Asn-467 are each glycosylated (N-linked (GlcNAc...) asparagine). A helical transmembrane segment spans residues 499-519 (SALISVGCLAIFVTVISLLVY). The Cytoplasmic segment spans residues 520–572 (KKHKEYNPIENSPGNVVRSKGLSVFLNRAKAVFFPGNQEKDPLLKNQEFKGVS). A Phosphoserine modification is found at Ser-542.

Belongs to the PMEL/NMB family. As to expression, widely expressed, but very low expression, if any, in the brain. Expressed in the epidermis with higher levels in melanocytes compared with keratinocytes and Langerhans cells (at protein level). Expressed in peripheral blood, but not bone marrow mononuclear cells. Expressed in tissue macrophages, including liver Kuppfer cells and lung alveolar macrophages, in podocytes and in some cells of the ciliary body of the eye (at protein level). May be overexpressed in various cancers, including melanoma and glioblastoma multiforme.

It localises to the cell membrane. The protein resides in the melanosome membrane. It is found in the early endosome membrane. Its function is as follows. Could be a melanogenic enzyme. This chain is Transmembrane glycoprotein NMB (GPNMB), found in Homo sapiens (Human).